A 155-amino-acid chain; its full sequence is Small ribosomal subunit protein uS7c (155 aa).

This sequence belongs to the universal ribosomal protein uS7 family. As to quaternary structure, part of the 30S ribosomal subunit.

Its subcellular location is the plastid. It localises to the chloroplast. Functionally, one of the primary rRNA binding proteins, it binds directly to 16S rRNA where it nucleates assembly of the head domain of the 30S subunit. The chain is Small ribosomal subunit protein uS7c (rps7) from Physcomitrium patens (Spreading-leaved earth moss).